A 110-amino-acid polypeptide reads, in one-letter code: Phosphoribosyl-AMP cyclohydrolase (110 aa).

Asp74 contacts Mg(2+). Position 75 (Cys75) interacts with Zn(2+). Asp76 and Asp78 together coordinate Mg(2+). Positions 91 and 98 each coordinate Zn(2+).

This sequence belongs to the PRA-CH family. As to quaternary structure, homodimer. Mg(2+) is required as a cofactor. Zn(2+) serves as cofactor.

The protein localises to the cytoplasm. The catalysed reaction is 1-(5-phospho-beta-D-ribosyl)-5'-AMP + H2O = 1-(5-phospho-beta-D-ribosyl)-5-[(5-phospho-beta-D-ribosylamino)methylideneamino]imidazole-4-carboxamide. Its pathway is amino-acid biosynthesis; L-histidine biosynthesis; L-histidine from 5-phospho-alpha-D-ribose 1-diphosphate: step 3/9. Its function is as follows. Catalyzes the hydrolysis of the adenine ring of phosphoribosyl-AMP. The protein is Phosphoribosyl-AMP cyclohydrolase of Lacticaseibacillus paracasei (strain ATCC 334 / BCRC 17002 / CCUG 31169 / CIP 107868 / KCTC 3260 / NRRL B-441) (Lactobacillus paracasei).